The sequence spans 514 residues: MQNNIDKVLILDFGSQFTQLITRRIRELNVYSEIHPFHVSIDFIKEFKPKAIILSGGPSSVYEEDAPKVDKQLFELGMPILGICYGMQIIVYSMGGKVESADKREYGKAEIEITNHESIFKSFGKSNIVWMSHGDSIKSIPEGFELIAKTPNTELAAIENKQKNIYAIQFHPEVVHTENGIKIIENFLFNICKCERNWNMGSFIEYEIKRIRETVGDKNVILGLSGGVDSSVAAVLIEKAIGKQLKCIFVNNGLLRKDEDKKVVEVFRDNFNIDLIYVDASKRFLDKLAGVTDPEQKRKVIGHEFVSVFNDEAKKIENVGFLAQGTLYPDVIESVSLRGSSAVIKSHHNVGGLPKDMKFELLEPFRELFKDEVREIGLELKLPEDIVYRQPFPGPGLAVRILGDITEERVKILQEADDIVVSEIKKAGLYRKLWQSFAILLPVKSVGVMGDGRTYEQVCAVRAVESVDAMTADWAKIDYNVLGIISNRIINEVKGINRVVYDISSKPPATIEWE.

A Glutamine amidotransferase type-1 domain is found at Lys-7–Asn-197. Cys-84 functions as the Nucleophile in the catalytic mechanism. Catalysis depends on residues His-171 and Glu-173. Positions Trp-198 to Arg-389 constitute a GMPS ATP-PPase domain. Ser-225–Ser-231 contacts ATP.

As to quaternary structure, homodimer.

The enzyme catalyses XMP + L-glutamine + ATP + H2O = GMP + L-glutamate + AMP + diphosphate + 2 H(+). The protein operates within purine metabolism; GMP biosynthesis; GMP from XMP (L-Gln route): step 1/1. Functionally, catalyzes the synthesis of GMP from XMP. This is GMP synthase [glutamine-hydrolyzing] from Brachyspira hyodysenteriae (strain ATCC 49526 / WA1).